We begin with the raw amino-acid sequence, 205 residues long: MDTVIELSKLLHDEEFKDNASCTSTPTLKTARIIESAVTGITLTASVPMIIIVITTMILYHRVAKHNATSFYVITLFASDFVLMWCVFFMTVNREQLFSFNRFFCQLVYFIYHAVCSYSISMLAIIATIRYKTLHRRKQTESKTYSTGRNIGILLLASSMCAIPTALFVQINGAKKTTGKCVVYLSSPKAYELFLAVKIVFSFIW.

The next 5 membrane-spanning stretches (helical) occupy residues 40–60 (GITLTASVPMIIIVITTMILY), 71–91 (FYVITLFASDFVLMWCVFFMT), 107–127 (LVYFIYHAVCSYSISMLAIIA), 151–171 (IGILLLASSMCAIPTALFVQI), and 185–205 (LSSPKAYELFLAVKIVFSFIW). A disulfide bond links Cys105 and Cys181.

This sequence belongs to the G-protein coupled receptor 1 family.

The protein localises to the host membrane. This Human herpesvirus 6B (strain Z29) (HHV-6 variant B) protein is G-protein coupled receptor (U12).